The sequence spans 471 residues: Alpha-galactosidase 1 (471 aa).

The signal sequence occupies residues 1 to 18 (MFAFYFLTACISLKGVFG). Cys42 and Cys74 are joined by a disulfide. Substrate is bound by residues Asp72 and Asp73. The N-linked (GlcNAc...) asparagine glycan is linked to Asn105. Cys121 and Cys151 are oxidised to a cystine. Lys147 contributes to the substrate binding site. The Nucleophile role is filled by Asp149. A glycan (N-linked (GlcNAc...) asparagine) is linked at Asn175. Arg205 is a substrate binding site. Asp209 functions as the Proton donor in the catalytic mechanism. 2 disulfides stabilise this stretch: Cys221-Cys237 and Cys223-Cys230. Residue Gln251 coordinates substrate. Asn270, Asn370, Asn403, Asn413, Asn422, Asn435, and Asn454 each carry an N-linked (GlcNAc...) asparagine glycan.

The protein belongs to the glycosyl hydrolase 27 family. Homotetramer.

It localises to the secreted. The enzyme catalyses Hydrolysis of terminal, non-reducing alpha-D-galactose residues in alpha-D-galactosides, including galactose oligosaccharides, galactomannans and galactolipids.. In Saccharomyces cerevisiae (Baker's yeast), this protein is Alpha-galactosidase 1 (MEL1).